Consider the following 143-residue polypeptide: Large ribosomal subunit protein uL15 (143 aa).

The interval 1 to 52 (MKLNTLAPAAGSKSAPKRLGRGIGSGLGKTSGKGHKGQKARSGGYHKVGFEG) is disordered. The span at 21–31 (RGIGSGLGKTS) shows a compositional bias: gly residues.

The protein belongs to the universal ribosomal protein uL15 family. In terms of assembly, part of the 50S ribosomal subunit.

Its function is as follows. Binds to the 23S rRNA. This Francisella tularensis subsp. novicida (strain U112) protein is Large ribosomal subunit protein uL15.